Here is a 21-residue protein sequence, read N- to C-terminus: MAAACRCLSLLLLSTCVALLL.

Belongs to the NPY family.

The sequence is that of Putative pancreatic polypeptide 2 (PPY2P) from Homo sapiens (Human).